Consider the following 421-residue polypeptide: Growth arrest-specific protein 7 (421 aa).

Positions 1–117 are disordered; it reads MATALQKPGM…SPGRKQSKEN (117 aa). A WW domain is found at 22–55; sequence VILPPGWHSYLSPQGRRYYVNTTTNETTWERPSS. Residues 41-52 show a composition bias toward polar residues; it reads VNTTTNETTWER. The span at 53–65 shows a compositional bias: low complexity; sequence PSSSPGISASPAP. Phosphoserine is present on residues S62 and S108. Residues 95–117 show a composition bias toward polar residues; sequence RKSTGDSQNLGSSSPGRKQSKEN. Positions 141–401 constitute an F-BAR domain; the sequence is TEWSYCDYFW…LLRKVDPAKD (261 aa). Positions 254-328 form a coiled coil; that stretch reads ENFKKDMKKC…RKSTQAGDDL (75 aa).

Expressed abundantly in brain with lower levels in heart and testis. In the brain, expressed prominently in the Purkinje layer of the cerebellum, moderately in hippocampus, and less extensively in cerebral cortex and caudate putamen.

The protein resides in the cytoplasm. May play a role in promoting maturation and morphological differentiation of cerebellar neurons. This is Growth arrest-specific protein 7 (Gas7) from Mus musculus (Mouse).